The primary structure comprises 472 residues: MTATSLKTLTPPSKQGLDQNRRSYWITTFGCQMNKADSERMAGILESMGYCEATAELDADLVLYNTCTIRDNAEQKVYSYLGRQAQRKRDNPNLTLVVAGCVAQQEGESLLRRVPELDLVMGPQHANRLETLLQQVDSGQQVVATEEHHILEDITTARRDSAICGWVNVIYGCNERCTYCVVPSVRGQEQSRRPEAIRLEMEGLAAQGFKEITLLGQNIDAYGRDLPGITAEGRREHTLTDLLHHVHDVEGIERLRFATSHPRYFTERLIDACADLSKVCEHFHIPFQSGDNALLKSMARGYTVERYRRIIDRIRDRMPDASISADVIVGFPGETDAQYRRTLDLIDEIAFDQVNTAAYSPRPNTPAATWDNQLPESVKVERLKEINALVERNARERNIRYQGRTEEVLAEGINPKDPEQLMGRTRTNRLTFFSATSPDGHLYQPGDLVNVRIDAVRSFSLSGTPLPSNALH.

One can recognise an MTTase N-terminal domain in the interval 22–138 (RSYWITTFGC…LETLLQQVDS (117 aa)). 6 residues coordinate [4Fe-4S] cluster: Cys-31, Cys-67, Cys-101, Cys-173, Cys-177, and Cys-180. Positions 159–396 (RDSAICGWVN…NALVERNARE (238 aa)) constitute a Radical SAM core domain. The TRAM domain occupies 399–467 (IRYQGRTEEV…SFSLSGTPLP (69 aa)).

This sequence belongs to the methylthiotransferase family. MiaB subfamily. Monomer. [4Fe-4S] cluster is required as a cofactor.

Its subcellular location is the cytoplasm. It catalyses the reaction N(6)-dimethylallyladenosine(37) in tRNA + (sulfur carrier)-SH + AH2 + 2 S-adenosyl-L-methionine = 2-methylsulfanyl-N(6)-dimethylallyladenosine(37) in tRNA + (sulfur carrier)-H + 5'-deoxyadenosine + L-methionine + A + S-adenosyl-L-homocysteine + 2 H(+). Catalyzes the methylthiolation of N6-(dimethylallyl)adenosine (i(6)A), leading to the formation of 2-methylthio-N6-(dimethylallyl)adenosine (ms(2)i(6)A) at position 37 in tRNAs that read codons beginning with uridine. The protein is tRNA-2-methylthio-N(6)-dimethylallyladenosine synthase of Synechococcus sp. (strain CC9902).